A 606-amino-acid polypeptide reads, in one-letter code: Aspartate--tRNA(Asp/Asn) ligase (606 aa).

L-aspartate is bound at residue E187. Positions 211-214 (QQFK) are aspartate. L-aspartate contacts are provided by R233 and H461. 233–235 (RDE) is a binding site for ATP. An ATP-binding site is contributed by E495. Residue R502 participates in L-aspartate binding. 547 to 550 (GLDR) is an ATP binding site.

This sequence belongs to the class-II aminoacyl-tRNA synthetase family. Type 1 subfamily. Homodimer.

The protein resides in the cytoplasm. It catalyses the reaction tRNA(Asx) + L-aspartate + ATP = L-aspartyl-tRNA(Asx) + AMP + diphosphate. Functionally, aspartyl-tRNA synthetase with relaxed tRNA specificity since it is able to aspartylate not only its cognate tRNA(Asp) but also tRNA(Asn). Reaction proceeds in two steps: L-aspartate is first activated by ATP to form Asp-AMP and then transferred to the acceptor end of tRNA(Asp/Asn). This is Aspartate--tRNA(Asp/Asn) ligase from Chlorobium phaeobacteroides (strain DSM 266 / SMG 266 / 2430).